A 475-amino-acid chain; its full sequence is Sulfate adenylyltransferase subunit 1 (475 aa).

One can recognise a tr-type G domain in the interval 25–240; it reads KSLLRFLTCG…VLETVEVINL (216 aa). A G1 region spans residues 34-41; it reads GSVDDGKS. 34–41 is a binding site for GTP; it reads GSVDDGKS. The interval 92 to 96 is G2; sequence GITID. Residues 113–116 form a G3 region; it reads DTPG. Residues 113 to 117 and 168 to 171 contribute to the GTP site; these read DTPGH and NKMD. A G4 region spans residues 168 to 171; sequence NKMD. Residues 206–208 are G5; sequence SAL.

It belongs to the TRAFAC class translation factor GTPase superfamily. Classic translation factor GTPase family. CysN/NodQ subfamily. In terms of assembly, heterodimer composed of CysD, the smaller subunit, and CysN.

The enzyme catalyses sulfate + ATP + H(+) = adenosine 5'-phosphosulfate + diphosphate. Its pathway is sulfur metabolism; hydrogen sulfide biosynthesis; sulfite from sulfate: step 1/3. In terms of biological role, with CysD forms the ATP sulfurylase (ATPS) that catalyzes the adenylation of sulfate producing adenosine 5'-phosphosulfate (APS) and diphosphate, the first enzymatic step in sulfur assimilation pathway. APS synthesis involves the formation of a high-energy phosphoric-sulfuric acid anhydride bond driven by GTP hydrolysis by CysN coupled to ATP hydrolysis by CysD. This Sodalis glossinidius (strain morsitans) protein is Sulfate adenylyltransferase subunit 1.